Consider the following 318-residue polypeptide: MRLLAGWLCLSLASVWLARRMWTLRSPLTRSLYVNMTSGPGGPAAAAGGRKENHQWYVCNREKLCESLQAVFVQSYLDQGTQIFLNNSIEKSGWLFIQLYHSFVSSVFSLFMSRTSINGLLGRGSMFVFSPDQFQRLLKINPDWKTHRLLDLGAGDGEVTKIMSPHFEEIYATELSETMIWQLQKKKYRVLGINEWQKTGFQYDVISCLNLLDRCDQPLTLLKDIRSVLEPTRGRVILALVLPFHPYVENVGGKWDKPSEILEIKGQNWEEQVNSLPEVFRKAGFVIEAFTRLPYLCEGDMYNDYYVLDDAVFVLKPV.

A signal peptide spans 1–18 (MRLLAGWLCLSLASVWLA). N-linked (GlcNAc...) asparagine glycosylation occurs at asparagine 35. S-adenosyl-L-homocysteine is bound by residues glutamate 174, asparagine 210, and tyrosine 295.

This sequence belongs to the METTL9 family.

The protein resides in the endoplasmic reticulum. It is found in the mitochondrion. The catalysed reaction is L-histidyl-[protein] + S-adenosyl-L-methionine = N(pros)-methyl-L-histidyl-[protein] + S-adenosyl-L-homocysteine + H(+). Functionally, protein-histidine N-methyltransferase that specifically catalyzes 1-methylhistidine (pros-methylhistidine) methylation of target proteins. Specifically methylates the second His of proteins with a His-x-His (HxH) motif (where 'x' is preferably a small amino acid), while exploiting the first one as a recognition signature. Catalyzes methylation of target proteins such as S100A9, NDUFB3, SLC39A5, SLC39A7, ARMC6 and DNAJB12; 1-methylhistidine modification may affect the binding of zinc and other metals to its target proteins. Constitutes the main methyltransferase for the 1-methylhistidine modification in cell. The sequence is that of Protein-L-histidine N-pros-methyltransferase from Bos taurus (Bovine).